Reading from the N-terminus, the 351-residue chain is S-adenosylmethionine:tRNA ribosyltransferase-isomerase (351 aa).

Belongs to the QueA family. As to quaternary structure, monomer.

It localises to the cytoplasm. It carries out the reaction 7-aminomethyl-7-carbaguanosine(34) in tRNA + S-adenosyl-L-methionine = epoxyqueuosine(34) in tRNA + adenine + L-methionine + 2 H(+). It functions in the pathway tRNA modification; tRNA-queuosine biosynthesis. Functionally, transfers and isomerizes the ribose moiety from AdoMet to the 7-aminomethyl group of 7-deazaguanine (preQ1-tRNA) to give epoxyqueuosine (oQ-tRNA). This is S-adenosylmethionine:tRNA ribosyltransferase-isomerase from Hydrogenovibrio crunogenus (strain DSM 25203 / XCL-2) (Thiomicrospira crunogena).